A 71-amino-acid polypeptide reads, in one-letter code: Small ribosomal subunit protein bS21 (71 aa).

The protein belongs to the bacterial ribosomal protein bS21 family.

The polypeptide is Small ribosomal subunit protein bS21 (Buchnera aphidicola subsp. Baizongia pistaciae (strain Bp)).